A 143-amino-acid polypeptide reads, in one-letter code: Transmembrane protein 80 (143 aa).

Helical transmembrane passes span 22-42, 47-67, 88-108, and 122-142; these read LLCL…LLLV, VFTY…LMGI, LAAS…FLLW, and PLLA…AAFV.

It is found in the membrane. The protein resides in the cell projection. It localises to the cilium. The polypeptide is Transmembrane protein 80 (TMEM80) (Bos taurus (Bovine)).